The sequence spans 467 residues: Mothers against decapentaplegic homolog 2 (467 aa).

At S2 the chain carries N-acetylserine. The residue at position 8 (T8) is a Phosphothreonine; by MAPK3. In terms of domain architecture, MH1 spans 10–176 (PVVKRLLGWK…YQRVETPVLP (167 aa)). An N6-acetyllysine modification is found at K19. Residues C74, C149, C161, and H166 each coordinate Zn(2+). Residues 207-217 (PAGIEPQSNYI) are compositionally biased toward polar residues. The disordered stretch occupies residues 207-251 (PAGIEPQSNYIPETPPPGYISEDGETSDQQLNQSMDTGSPAELSP). At T220 the chain carries Phosphothreonine. Residues 221 to 225 (PPPGY) carry the PY-motif motif. The span at 233 to 243 (SDQQLNQSMDT) shows a compositional bias: polar residues. Position 240 is a phosphoserine; by CAMK2 (S240). 6 positions are modified to phosphoserine: S245, S250, S255, S458, S460, and S464. One can recognise an MH2 domain in the interval 274-467 (WCSIAYYELN…SPSVRCSSMS (194 aa)). Phosphoserine; by TGFBR1 is present on residues S465 and S467.

This sequence belongs to the dwarfin/SMAD family. In terms of assembly, monomer; in the absence of TGF-beta. Heterodimer; in the presence of TGF-beta. Forms a heterodimer with co-SMAD, SMAD4, in the nucleus to form the transactivation complex SMAD2/SMAD4. Found in a complex with SMAD3 and TRIM33 upon addition of TGF-beta. Identified in a complex that contains at least ZNF451, SMAD2, SMAD3 and SMAD4. Interacts (via the MH2 domain) with ZFYVE9; may form trimers with the SMAD4 co-SMAD. Interacts with TAZ/WWRT1. Interacts with FOXH1. Interacts with SNW1. Interacts with CREB-binding protein (CBP) and EP300. Interacts with SNON. Interacts with ALK4/ACVR1B. Interacts with SKOR1. Interacts with SKOR2. Interacts with PRDM16. Interacts (via MH2 domain) with LEMD3. Interacts with RBPMS. Interacts with WWP1. Interacts (dephosphorylated form, via the MH1 and MH2 domains) with RANBP3 (via its C-terminal R domain); the interaction results in the export of dephosphorylated SMAD3 out of the nucleus and termination of the TGF-beta signaling. Interacts with PDPK1 (via PH domain). Interacts with DAB2; the interactions are enhanced upon TGF-beta stimulation. Interacts with USP15. Interacts with PPP5C. Interacts with LDLRAD4 (via the SMAD interaction motif). Interacts (via MH2 domain) with PMEPA1 (via the SMAD interaction motif). Interacts with ZFHX3. Interacts with ZNF451. Interacts with SMURF2 when phosphorylated on Ser-465/467. Interacts with PPM1A. Interacts with TGF-beta. Interacts with TGFBR1. Interacts with TGIF. Interacts with SMAD3 and TRIM33. Interacts with ZNF580. Interacts with NEDD4L in response to TGF-beta. Interacts with HGS. Interacts with AIP1. Interacts with WWP1. Interacts with PML. Interacts weakly with ZNF8. Interacts (when phosphorylated) with RNF111; RNF111 acts as an enhancer of the transcriptional responses by mediating ubiquitination and degradation of SMAD2 inhibitors. Interacts with YAP1 (when phosphorylated at 'Ser-127'). Interacts when phosphorylated with IPO7; the interaction facilitates translocation of SMAD2 to the nucleus. Interacts with MTMR4; negatively regulates TGF-beta signaling through SMAD2 dephosphorylation and retention in endosomes. Post-translationally, phosphorylated on one or several of Thr-220, Ser-245, Ser-250, and Ser-255. In response to TGF-beta, phosphorylated on Ser-465/467 by TGF-beta and activin type 1 receptor kinases. TGF-beta-induced Ser-465/467 phosphorylation declines progressively in a KMT5A-dependent manner. Able to interact with SMURF2 when phosphorylated on Ser-465/467, recruiting other proteins, such as SNON, for degradation. In response to decorin, the naturally occurring inhibitor of TGF-beta signaling, phosphorylated on Ser-240 by CaMK2. Phosphorylated by MAPK3 upon EGF stimulation; which increases transcriptional activity and stability, and is blocked by calmodulin. Phosphorylated by PDPK1. In response to TGF-beta, ubiquitinated by NEDD4L; which promotes its degradation. Monoubiquitinated, leading to prevent DNA-binding. Deubiquitination by USP15 alleviates inhibition and promotes activation of TGF-beta target genes. Ubiquitinated by RNF111, leading to its degradation: only SMAD2 proteins that are 'in use' are targeted by RNF111, RNF111 playing a key role in activating SMAD2 and regulating its turnover. In terms of processing, acetylated on Lys-19 by coactivators in response to TGF-beta signaling, which increases transcriptional activity. Isoform short: Acetylation increases DNA binding activity in vitro and enhances its association with target promoters in vivo. Acetylation in the nucleus by EP300 is enhanced by TGF-beta. Expressed at high levels in skeletal muscle, endothelial cells, heart and placenta.

Its subcellular location is the cytoplasm. It localises to the nucleus. Receptor-regulated SMAD (R-SMAD) that is an intracellular signal transducer and transcriptional modulator activated by TGF-beta (transforming growth factor) and activin type 1 receptor kinases. Binds the TRE element in the promoter region of many genes that are regulated by TGF-beta and, on formation of the SMAD2/SMAD4 complex, activates transcription. Promotes TGFB1-mediated transcription of odontoblastic differentiation genes in dental papilla cells. Positively regulates PDPK1 kinase activity by stimulating its dissociation from the 14-3-3 protein YWHAQ which acts as a negative regulator. May act as a tumor suppressor in colorectal carcinoma. This is Mothers against decapentaplegic homolog 2 (SMAD2) from Homo sapiens (Human).